The primary structure comprises 151 residues: Small ribosomal subunit protein uS15 (151 aa).

This sequence belongs to the universal ribosomal protein uS15 family.

The protein is Small ribosomal subunit protein uS15 (RPS13) of Ciona intestinalis (Transparent sea squirt).